A 424-amino-acid chain; its full sequence is Serine/threonine-protein kinase H1 (424 aa).

Residue Gly2 is the site of N-myristoyl glycine attachment. Residue Cys3 is the site of S-palmitoyl cysteine attachment. Residues 59-79 (APPCPGVPNTGHTAPPSEPPR) form a disordered region. Residues 98-355 (YDIKALIGRG…ALQALRHPWV (258 aa)) enclose the Protein kinase domain. Residues 104 to 112 (IGRGSFSRV) and Lys127 contribute to the ATP site. The active-site Proton acceptor is the Asp218. Positions 378 to 408 (RASSRCQSTKSSQSTRSSRSTRSNKSRRVRE) are disordered. 2 positions are modified to phosphoserine; by autocatalysis: Ser380 and Ser381. Low complexity predominate over residues 381–398 (SRCQSTKSSQSTRSSRST).

It belongs to the protein kinase superfamily. CAMK Ser/Thr protein kinase family. Homodimer. In terms of processing, autophosphorylated on serine residues. Post-translationally, myristoylated. Required for membrane association. Prerequisite for palmitoylation to occur. Palmitoylated.

Its subcellular location is the golgi apparatus. The protein resides in the cytoplasm. It is found in the cytoskeleton. The protein localises to the microtubule organizing center. It localises to the centrosome. Its subcellular location is the nucleus speckle. The protein resides in the endoplasmic reticulum membrane. It is found in the cell membrane. It catalyses the reaction L-seryl-[protein] + ATP = O-phospho-L-seryl-[protein] + ADP + H(+). It carries out the reaction L-threonyl-[protein] + ATP = O-phospho-L-threonyl-[protein] + ADP + H(+). With respect to regulation, activity depends on Ca(2+) concentration. In terms of biological role, serine/threonine protein kinase that may be involved in the regulation of pre-mRNA processing. It may phosphorylate components of nuclear splice factor compartments (SFC), such as non-snRNP splicing factors containing a serine/arginine-rich domain (SR proteins). Reversible phosphorylation of SR proteins may cause their release into the nucleoplasm and change their local concentration, thereby influencing alternative splicing. The polypeptide is Serine/threonine-protein kinase H1 (Pskh1) (Mus musculus (Mouse)).